A 72-amino-acid polypeptide reads, in one-letter code: Large ribosomal subunit protein bL32 (72 aa).

The protein belongs to the bacterial ribosomal protein bL32 family.

This chain is Large ribosomal subunit protein bL32, found in Dehalococcoides mccartyi (strain ATCC BAA-2266 / KCTC 15142 / 195) (Dehalococcoides ethenogenes (strain 195)).